The chain runs to 249 residues: Oxidoreductase asL5 (249 aa).

NADP(+) is bound by residues Ile21, Lys45, Asn90, Tyr155, Lys159, Ile188, and Thr190. Tyr155 serves as the catalytic Proton acceptor. Lys159 functions as the Lowers pKa of active site Tyr in the catalytic mechanism.

The protein belongs to the short-chain dehydrogenases/reductases (SDR) family.

In terms of biological role, oxidoreductase; part of the gene cluster that mediates the biosynthesis of xenovulene A, an unusual meroterpenoid that has potent inhibitory effects on the human gamma-aminobutyrate A (GABAA) benzodiazepine receptor. The first step of xenovulene A biosynthesis is the biosynthesis of 3-methylorcinaldehyde performed by the non-reducing polyketide synthase aspks1. The salicylate hydroxylase asL1 then catalyzes the oxidative dearomatization of 3-methylorcinaldehyde to yield a dearomatized hydroxycyclohexadione. The 2-oxoglutarate-dependent dioxygenase asL3 further catalyzes the oxidative ring expansion to provide the first tropolone metabolite. The cytochrome P450 monooxygenase asR2 allows the synthesis of tropolone hemiacetal. In parallel, a previously unrecognised class of terpene cyclase, asR6, produces alpha-humulene from farnesylpyrophosphate (FPP). The putative Diels-Alderase asR5 probably catalyzes the formation of the tropolone-humulene skeleton by linking humulene and the polyketide moiety. Oxidative-ring contractions catalyzed by asL4 and asL6 then processively remove carbon atoms from the polyketide to yield xenovulene A. The protein is Oxidoreductase asL5 of Sarocladium schorii (Acremonium strictum (strain IMI 501407)).